A 140-amino-acid chain; its full sequence is ATP synthase epsilon chain (140 aa).

The protein belongs to the ATPase epsilon chain family. F-type ATPases have 2 components, CF(1) - the catalytic core - and CF(0) - the membrane proton channel. CF(1) has five subunits: alpha(3), beta(3), gamma(1), delta(1), epsilon(1). CF(0) has three main subunits: a, b and c.

The protein resides in the cell inner membrane. Functionally, produces ATP from ADP in the presence of a proton gradient across the membrane. The sequence is that of ATP synthase epsilon chain from Stenotrophomonas maltophilia (strain R551-3).